The chain runs to 241 residues: MPKRTKLLPQQTFQVHQPRSLVSEGFTVKAMMKNSVVRGPPVAGAFKERPAKPTTFRKCYERGDFPIALEHDSKGNKIAWKVEIEKLDYHHYLPLFFDGLSEMTFPYEFFARRGIHDMLEHGGNKILPVIPQLIIPIKNALNLRNRQIICVTLKVLQHLVVSSEMVGEALLPYYRQILPILNIFKNMNVNSGDGIDYSQQKRENIGDLIQETLEAFERYGGEDAFINIKYMVPTYESCLLN.

Microtubule inner protein component of sperm flagellar doublet microtubules. Forms a large molecular chaperone complex containing heat shock proteins 70 and 90 and chaperonin components. Interacts with STIP1, PRKN, GPR37, HSPA8, TCP1/CCT1, CCT2, CCT3, CCT4, CCT5, CCT6A, CCT7 and CCT8. Interacts with MEIG1.

It is found in the cytoplasm. The protein localises to the cytoskeleton. It localises to the cilium axoneme. The protein resides in the flagellum axoneme. Functionally, microtubule inner protein (MIP) part of the dynein-decorated doublet microtubules (DMTs) in cilia axoneme, which is required for motile cilia beating. Suppresses cell death induced by accumulation of unfolded Pael receptor (Pael-R, a substrate of Parkin). Facilitates the formation of inclusions consisting of Pael-R, molecular chaperones, protein degradation molecules and itself when proteasome is inhibited. May play an important role in the formation of Lewy bodies and protection of dopaminergic neurons against Parkinson disease. The protein is Parkin coregulated gene protein homolog (Pacrg) of Mus musculus (Mouse).